The chain runs to 352 residues: Probable dual-specificity RNA methyltransferase RlmN (352 aa).

Glu-92 acts as the Proton acceptor in catalysis. In terms of domain architecture, Radical SAM core spans 98–328; the sequence is YKHGFTACIS…ATIRREMGTD (231 aa). Cys-105 and Cys-333 are oxidised to a cystine. Residues Cys-112, Cys-116, and Cys-119 each contribute to the [4Fe-4S] cluster site. Residues 159-160, Ser-191, 214-216, and Asn-290 each bind S-adenosyl-L-methionine; these read GE and SLH. Residue Cys-333 is the S-methylcysteine intermediate of the active site.

It belongs to the radical SAM superfamily. RlmN family. It depends on [4Fe-4S] cluster as a cofactor.

The protein localises to the cytoplasm. It carries out the reaction adenosine(2503) in 23S rRNA + 2 reduced [2Fe-2S]-[ferredoxin] + 2 S-adenosyl-L-methionine = 2-methyladenosine(2503) in 23S rRNA + 5'-deoxyadenosine + L-methionine + 2 oxidized [2Fe-2S]-[ferredoxin] + S-adenosyl-L-homocysteine. The catalysed reaction is adenosine(37) in tRNA + 2 reduced [2Fe-2S]-[ferredoxin] + 2 S-adenosyl-L-methionine = 2-methyladenosine(37) in tRNA + 5'-deoxyadenosine + L-methionine + 2 oxidized [2Fe-2S]-[ferredoxin] + S-adenosyl-L-homocysteine. Functionally, specifically methylates position 2 of adenine 2503 in 23S rRNA and position 2 of adenine 37 in tRNAs. This chain is Probable dual-specificity RNA methyltransferase RlmN, found in Alkaliphilus metalliredigens (strain QYMF).